A 351-amino-acid chain; its full sequence is D-alanine--D-alanine ligase (351 aa).

An ATP-grasp domain is found at 135 to 344 (KMAFAQAGLP…FAELVDQLIQ (210 aa)). ATP is bound at residue 171-226 (EQRLGYPCFVKPANLGSSVGIAKVRSRSELEKALDSAASYDRRIVIETGVKAREVE). The Mg(2+) site is built by Asp-297, Glu-311, and Asn-313.

The protein belongs to the D-alanine--D-alanine ligase family. Mg(2+) is required as a cofactor. The cofactor is Mn(2+).

The protein localises to the cytoplasm. The enzyme catalyses 2 D-alanine + ATP = D-alanyl-D-alanine + ADP + phosphate + H(+). The protein operates within cell wall biogenesis; peptidoglycan biosynthesis. In terms of biological role, cell wall formation. The sequence is that of D-alanine--D-alanine ligase from Rippkaea orientalis (strain PCC 8801 / RF-1) (Cyanothece sp. (strain PCC 8801)).